Reading from the N-terminus, the 1140-residue chain is Eukaryotic translation initiation factor 3 subunit A (1140 aa).

One can recognise a PCI domain in the interval 319-502; that stretch reads LQRMAAHVLL…HCIYFGTDLT (184 aa). Composition is skewed to basic and acidic residues over residues 590 to 624, 826 to 903, 925 to 965, 1000 to 1019, 1026 to 1053, and 1061 to 1087; these read NNAR…EERE, RMAQ…RPEG, DRAD…KDNE, SRDD…DFRN, RGGD…EQQR, and DAPR…RDVR. 2 disordered regions span residues 590–632 and 826–1140; these read NNAR…QNEI and RMAQ…VKRR. Gly residues predominate over residues 1091–1101; sequence PKEGGGGGGGN. Residues 1108–1130 show a composition bias toward basic and acidic residues; it reads PRDEKPTTKQRDQPQDKENKAGD.

Belongs to the eIF-3 subunit A family. In terms of assembly, component of the eukaryotic translation initiation factor 3 (eIF-3) complex. The eIF-3 complex interacts with pix.

It localises to the cytoplasm. RNA-binding component of the eukaryotic translation initiation factor 3 (eIF-3) complex, which is involved in protein synthesis of a specialized repertoire of mRNAs and, together with other initiation factors, stimulates binding of mRNA and methionyl-tRNAi to the 40S ribosome. The eIF-3 complex specifically targets and initiates translation of a subset of mRNAs involved in cell proliferation. The chain is Eukaryotic translation initiation factor 3 subunit A from Drosophila willistoni (Fruit fly).